A 360-amino-acid polypeptide reads, in one-letter code: Probable dual-specificity RNA methyltransferase RlmN (360 aa).

Residue E91 is the Proton acceptor of the active site. A Radical SAM core domain is found at 97–335 (QHYGQSVCVT…CVVRQEHGTD (239 aa)). C104 and C340 are joined by a disulfide. Residues C111, C115, and C118 each contribute to the [4Fe-4S] cluster site. S-adenosyl-L-methionine is bound by residues 163–164 (GE), S195, 218–220 (SLH), and N296. C340 functions as the S-methylcysteine intermediate in the catalytic mechanism.

This sequence belongs to the radical SAM superfamily. RlmN family. Requires [4Fe-4S] cluster as cofactor.

Its subcellular location is the cytoplasm. The enzyme catalyses adenosine(2503) in 23S rRNA + 2 reduced [2Fe-2S]-[ferredoxin] + 2 S-adenosyl-L-methionine = 2-methyladenosine(2503) in 23S rRNA + 5'-deoxyadenosine + L-methionine + 2 oxidized [2Fe-2S]-[ferredoxin] + S-adenosyl-L-homocysteine. The catalysed reaction is adenosine(37) in tRNA + 2 reduced [2Fe-2S]-[ferredoxin] + 2 S-adenosyl-L-methionine = 2-methyladenosine(37) in tRNA + 5'-deoxyadenosine + L-methionine + 2 oxidized [2Fe-2S]-[ferredoxin] + S-adenosyl-L-homocysteine. Functionally, specifically methylates position 2 of adenine 2503 in 23S rRNA and position 2 of adenine 37 in tRNAs. The chain is Probable dual-specificity RNA methyltransferase RlmN from Streptococcus equi subsp. equi (strain 4047).